The chain runs to 755 residues: Polyribonucleotide nucleotidyltransferase (755 aa).

2 residues coordinate Mg(2+): Asp527 and Asp533. One can recognise a KH domain in the interval 593 to 652 (PRITTIKVPVDKIGEVIGPKGKMINSITEETGANISIEDDGTVFVGAADGASAQAAIDKI). One can recognise an S1 motif domain in the interval 664–733 (GERFLGTVVK…NRGKISLVPV (70 aa)). The segment at 734 to 755 (GEEDAAEAPAPAEAQPADAVTQ) is disordered. The segment covering 740–755 (EAPAPAEAQPADAVTQ) has biased composition (low complexity).

It belongs to the polyribonucleotide nucleotidyltransferase family. Mg(2+) is required as a cofactor.

Its subcellular location is the cytoplasm. It catalyses the reaction RNA(n+1) + phosphate = RNA(n) + a ribonucleoside 5'-diphosphate. Its function is as follows. Involved in mRNA degradation. Catalyzes the phosphorolysis of single-stranded polyribonucleotides processively in the 3'- to 5'-direction. In Mycobacteroides abscessus (strain ATCC 19977 / DSM 44196 / CCUG 20993 / CIP 104536 / JCM 13569 / NCTC 13031 / TMC 1543 / L948) (Mycobacterium abscessus), this protein is Polyribonucleotide nucleotidyltransferase.